The sequence spans 809 residues: BTB/POZ domain-containing protein At2g30600 (809 aa).

BTB domains are found at residues 211–273 and 351–420; these read SDTV…QILE and SDIK…NMED. Positions 466 to 537 constitute a BACK domain; the sequence is VVSSISSCKL…LMWCMKAEES (72 aa).

The protein operates within protein modification; protein ubiquitination. Functionally, may act as a substrate-specific adapter of an E3 ubiquitin-protein ligase complex (CUL3-RBX1-BTB) which mediates the ubiquitination and subsequent proteasomal degradation of target proteins. This chain is BTB/POZ domain-containing protein At2g30600, found in Arabidopsis thaliana (Mouse-ear cress).